Reading from the N-terminus, the 485-residue chain is NADH-quinone oxidoreductase subunit N (485 aa).

14 consecutive transmembrane segments (helical) span residues 8–28, 35–55, 75–95, 105–125, 127–147, 159–179, 203–223, 235–255, 271–291, 297–317, 326–346, 374–394, 408–427, and 455–475; these read LIAL…MLSI, FLNA…LWFV, LYTG…YPWL, FYLL…ANHL, SLFL…GYAF, YTIL…LVYA, LLAG…LVPF, PAPV…GVVM, VVLG…ALTQ, LLGY…IALK, VGVY…VVSL, AVMT…GFIG, WWLT…YYLR, and VVVL…QPLI.

It belongs to the complex I subunit 2 family. In terms of assembly, NDH-1 is composed of 13 different subunits. Subunits NuoA, H, J, K, L, M, N constitute the membrane sector of the complex.

It localises to the cell inner membrane. It carries out the reaction a quinone + NADH + 5 H(+)(in) = a quinol + NAD(+) + 4 H(+)(out). Its function is as follows. NDH-1 shuttles electrons from NADH, via FMN and iron-sulfur (Fe-S) centers, to quinones in the respiratory chain. The immediate electron acceptor for the enzyme in this species is believed to be ubiquinone. Couples the redox reaction to proton translocation (for every two electrons transferred, four hydrogen ions are translocated across the cytoplasmic membrane), and thus conserves the redox energy in a proton gradient. The chain is NADH-quinone oxidoreductase subunit N from Cronobacter sakazakii (strain ATCC BAA-894) (Enterobacter sakazakii).